Reading from the N-terminus, the 254-residue chain is Alcohol dehydrogenase 2 (254 aa).

Position 10–33 (10–33 (FVAGLGGIGFDTSREIVKSGPKNL)) interacts with NAD(+). Residue Ser-138 participates in substrate binding. The Proton acceptor role is filled by Tyr-151.

The protein belongs to the short-chain dehydrogenases/reductases (SDR) family. As to quaternary structure, homodimer.

The enzyme catalyses a primary alcohol + NAD(+) = an aldehyde + NADH + H(+). It carries out the reaction a secondary alcohol + NAD(+) = a ketone + NADH + H(+). This is Alcohol dehydrogenase 2 (Adh2) from Drosophila buzzatii (Fruit fly).